We begin with the raw amino-acid sequence, 471 residues long: 3-isopropylmalate dehydratase large subunit (471 aa).

3 residues coordinate [4Fe-4S] cluster: Cys-347, Cys-407, and Cys-410.

The protein belongs to the aconitase/IPM isomerase family. LeuC type 1 subfamily. Heterodimer of LeuC and LeuD. [4Fe-4S] cluster is required as a cofactor.

It carries out the reaction (2R,3S)-3-isopropylmalate = (2S)-2-isopropylmalate. The protein operates within amino-acid biosynthesis; L-leucine biosynthesis; L-leucine from 3-methyl-2-oxobutanoate: step 2/4. Its function is as follows. Catalyzes the isomerization between 2-isopropylmalate and 3-isopropylmalate, via the formation of 2-isopropylmaleate. This is 3-isopropylmalate dehydratase large subunit from Acaryochloris marina (strain MBIC 11017).